The primary structure comprises 87 residues: Phosphoribosyl-ATP pyrophosphatase (87 aa).

The protein belongs to the PRA-PH family.

The protein resides in the cytoplasm. The catalysed reaction is 1-(5-phospho-beta-D-ribosyl)-ATP + H2O = 1-(5-phospho-beta-D-ribosyl)-5'-AMP + diphosphate + H(+). It participates in amino-acid biosynthesis; L-histidine biosynthesis; L-histidine from 5-phospho-alpha-D-ribose 1-diphosphate: step 2/9. The chain is Phosphoribosyl-ATP pyrophosphatase from Corynebacterium diphtheriae (strain ATCC 700971 / NCTC 13129 / Biotype gravis).